The primary structure comprises 571 residues: Putative diflavin flavoprotein A 1 (571 aa).

The tract at residues 43 to 236 is zinc metallo-hydrolase; that stretch reads ENGTTYNSFL…PPVQLVATGH (194 aa). His92, Glu94, Asp96, His159, Asp178, and His236 together coordinate Fe cation. One can recognise a Flavodoxin-like domain in the interval 265–426; that stretch reads VAIFYAANYG…DLDKALGRLS (162 aa). Residues 427–571 form a flavodoxin-reductase-like region; it reads GGLYIITAQK…VHHRKVGNHY (145 aa).

The protein in the N-terminal section; belongs to the zinc metallo-hydrolase group 3 family. This sequence in the C-terminal section; belongs to the flavodoxin reductase family. Requires Fe cation as cofactor.

Mediates electron transfer from NADH to oxygen, reducing it to water. This modular protein has 3 redox cofactors, in other organisms the same activity requires 2 or 3 proteins. This chain is Putative diflavin flavoprotein A 1 (dfa1), found in Thermosynechococcus vestitus (strain NIES-2133 / IAM M-273 / BP-1).